A 2223-amino-acid polypeptide reads, in one-letter code: Protein Ycf2 (2223 aa).

Residue 1576–1583 (GSIGTGRS) participates in ATP binding.

It belongs to the Ycf2 family.

It is found in the plastid. Its subcellular location is the chloroplast stroma. In terms of biological role, probable ATPase of unknown function. Its presence in a non-photosynthetic plant (Epifagus virginiana) and experiments in tobacco indicate that it has an essential function which is probably not related to photosynthesis. This is Protein Ycf2 from Silene latifolia (White campion).